Consider the following 228-residue polypeptide: Thiamine-phosphate synthase (228 aa).

Residues 57 to 61 (QLRDK) and N89 contribute to the 4-amino-2-methyl-5-(diphosphooxymethyl)pyrimidine site. D90 and D109 together coordinate Mg(2+). 4-amino-2-methyl-5-(diphosphooxymethyl)pyrimidine is bound at residue S128. 154–156 (TPS) is a binding site for 2-[(2R,5Z)-2-carboxy-4-methylthiazol-5(2H)-ylidene]ethyl phosphate. K157 contributes to the 4-amino-2-methyl-5-(diphosphooxymethyl)pyrimidine binding site. 2-[(2R,5Z)-2-carboxy-4-methylthiazol-5(2H)-ylidene]ethyl phosphate-binding positions include G185 and 205 to 206 (IS).

The protein belongs to the thiamine-phosphate synthase family. Requires Mg(2+) as cofactor.

The catalysed reaction is 2-[(2R,5Z)-2-carboxy-4-methylthiazol-5(2H)-ylidene]ethyl phosphate + 4-amino-2-methyl-5-(diphosphooxymethyl)pyrimidine + 2 H(+) = thiamine phosphate + CO2 + diphosphate. It carries out the reaction 2-(2-carboxy-4-methylthiazol-5-yl)ethyl phosphate + 4-amino-2-methyl-5-(diphosphooxymethyl)pyrimidine + 2 H(+) = thiamine phosphate + CO2 + diphosphate. It catalyses the reaction 4-methyl-5-(2-phosphooxyethyl)-thiazole + 4-amino-2-methyl-5-(diphosphooxymethyl)pyrimidine + H(+) = thiamine phosphate + diphosphate. It functions in the pathway cofactor biosynthesis; thiamine diphosphate biosynthesis; thiamine phosphate from 4-amino-2-methyl-5-diphosphomethylpyrimidine and 4-methyl-5-(2-phosphoethyl)-thiazole: step 1/1. Condenses 4-methyl-5-(beta-hydroxyethyl)thiazole monophosphate (THZ-P) and 2-methyl-4-amino-5-hydroxymethyl pyrimidine pyrophosphate (HMP-PP) to form thiamine monophosphate (TMP). The chain is Thiamine-phosphate synthase from Roseiflexus castenholzii (strain DSM 13941 / HLO8).